We begin with the raw amino-acid sequence, 361 residues long: Cell cycle control protein 50A (361 aa).

A disordered region spans residues 1 to 28 (MAMNYNAKDEVDGGPPCPPGGTAKTRRP). At Ala-2 the chain carries N-acetylalanine. The interval 2-48 (AMNYNAKDEVDGGPPCPPGGTAKTRRPDNTAFKQQRLPAWQPILTAG) is required for ATPase and aminophospholipid flippase activity. The Cytoplasmic portion of the chain corresponds to 2–49 (AMNYNAKDEVDGGPPCPPGGTAKTRRPDNTAFKQQRLPAWQPILTAGT). An interaction with ATP8A2 region spans residues 49-348 (TVLPTFFIIG…LGVVLLVINH (300 aa)). The chain crosses the membrane as a helical span at residues 50 to 70 (VLPTFFIIGLIFIPIGIGIFV). The Exoplasmic loop segment spans residues 71–325 (TSNNIREIEI…SWMGGKNPFL (255 aa)). Cystine bridges form between Cys-91–Cys-104, Cys-94–Cys-102, and Cys-157–Cys-171. Asn-180, Asn-190, and Asn-294 each carry an N-linked (GlcNAc...) asparagine glycan. Residues 326-346 (GIAYITIGSISFLLGVVLLVI) form a helical membrane-spanning segment. Topologically, residues 347 to 361 (NHKYRNSSNTADITI) are cytoplasmic.

The protein belongs to the CDC50/LEM3 family. As to quaternary structure, component of various P4-ATPase flippase complexes which consists of a catalytic alpha subunit and an accessory beta subunit. Interacts with ATP8A1 to form a flippase complex; this complex forms an intermediate phosphoenzyme. Interacts with ATP8A2 to form a flippase complex. ATP8B1:TMEM30A and ATP8B2:TMEM30A flippase complexes have been shown to form intermediate phosphoenzymes in vitro. Interacts with alpha subunits ATP8A1, ATP8B1, ATP8B2, ATP8B4, ATP10A, ATP10B, ATP10D, ATP11A, ATP11B and ATP11C. In terms of processing, N-glycosylated; contributes to ATP8A2:TMEM30A flippase complex assembly but not to functional activity. In terms of tissue distribution, expressed in photoreceptor cells; detected in retina outer segment and other retinal layers (at protein level).

The protein localises to the membrane. The protein resides in the golgi apparatus. It is found in the cytoplasmic vesicle. Its subcellular location is the secretory vesicle membrane. It localises to the apical cell membrane. The protein localises to the photoreceptor inner segment. The protein resides in the cell projection. It is found in the cilium. Its subcellular location is the photoreceptor outer segment. Its function is as follows. Accessory component of a P4-ATPase flippase complex which catalyzes the hydrolysis of ATP coupled to the transport of aminophospholipids from the outer to the inner leaflet of various membranes and ensures the maintenance of asymmetric distribution of phospholipids. Phospholipid translocation also seems to be implicated in vesicle formation and in uptake of lipid signaling molecules. The beta subunit may assist in binding of the phospholipid substrate. Required for the proper folding, assembly and ER to Golgi exit of the ATP8A2:TMEM30A flippase complex. ATP8A2:TMEM30A may be involved in regulation of neurite outgrowth, and, reconstituted to liposomes, predomiminantly transports phosphatidylserine (PS) and to a lesser extent phosphatidylethanolamine (PE). The ATP8A1:TMEM30A flippase complex seems to play a role in regulation of cell migration probably involving flippase-mediated translocation of phosphatidylethanolamine (PE) at the plasma membrane. Required for the formation of the ATP8A2, ATP8B1 and ATP8B2 P-type ATPAse intermediate phosphoenzymes. Involved in uptake of platelet-activating factor (PAF). Can also mediate the export of alpha subunits ATP8A1, ATP8B1, ATP8B2, ATP8B4, ATP10A, ATP10B, ATP10D, ATP11A, ATP11B and ATP11C from the ER to other membrane localizations. This chain is Cell cycle control protein 50A, found in Bos taurus (Bovine).